The chain runs to 261 residues: Triosephosphate isomerase (261 aa).

Asn-10 to Lys-12 lines the substrate pocket. His-100 functions as the Electrophile in the catalytic mechanism. Glu-172 (proton acceptor) is an active-site residue. Substrate contacts are provided by residues Gly-178, Ser-218, and Gly-239–Gly-240.

The protein belongs to the triosephosphate isomerase family. Homodimer.

It localises to the cytoplasm. It catalyses the reaction D-glyceraldehyde 3-phosphate = dihydroxyacetone phosphate. Its pathway is carbohydrate biosynthesis; gluconeogenesis. It participates in carbohydrate degradation; glycolysis; D-glyceraldehyde 3-phosphate from glycerone phosphate: step 1/1. In terms of biological role, involved in the gluconeogenesis. Catalyzes stereospecifically the conversion of dihydroxyacetone phosphate (DHAP) to D-glyceraldehyde-3-phosphate (G3P). This chain is Triosephosphate isomerase, found in Mycobacterium tuberculosis (strain CDC 1551 / Oshkosh).